The following is a 237-amino-acid chain: Ribonuclease PH (237 aa).

Residues R86 and G124 to R126 each bind phosphate.

The protein belongs to the RNase PH family. Homohexameric ring arranged as a trimer of dimers.

It carries out the reaction tRNA(n+1) + phosphate = tRNA(n) + a ribonucleoside 5'-diphosphate. Its function is as follows. Phosphorolytic 3'-5' exoribonuclease that plays an important role in tRNA 3'-end maturation. Removes nucleotide residues following the 3'-CCA terminus of tRNAs; can also add nucleotides to the ends of RNA molecules by using nucleoside diphosphates as substrates, but this may not be physiologically important. Probably plays a role in initiation of 16S rRNA degradation (leading to ribosome degradation) during starvation. This chain is Ribonuclease PH, found in Shewanella woodyi (strain ATCC 51908 / MS32).